Reading from the N-terminus, the 143-residue chain is Nucleoside diphosphate kinase (143 aa).

Lys-11, Phe-59, Arg-87, Thr-93, Arg-104, and Asn-114 together coordinate ATP. The active-site Pros-phosphohistidine intermediate is the His-117.

It belongs to the NDK family. Homotetramer. Mg(2+) serves as cofactor.

It is found in the cytoplasm. It catalyses the reaction a 2'-deoxyribonucleoside 5'-diphosphate + ATP = a 2'-deoxyribonucleoside 5'-triphosphate + ADP. The catalysed reaction is a ribonucleoside 5'-diphosphate + ATP = a ribonucleoside 5'-triphosphate + ADP. Functionally, major role in the synthesis of nucleoside triphosphates other than ATP. The ATP gamma phosphate is transferred to the NDP beta phosphate via a ping-pong mechanism, using a phosphorylated active-site intermediate. The protein is Nucleoside diphosphate kinase of Ectopseudomonas mendocina (strain ymp) (Pseudomonas mendocina).